The sequence spans 151 residues: UPF0178 protein YaiI (151 aa).

It belongs to the UPF0178 family.

The protein is UPF0178 protein YaiI of Salmonella enteritidis PT4 (strain P125109).